Reading from the N-terminus, the 144-residue chain is Elicitor-responsive protein 3 (144 aa).

Residues 1–103 (MVQGTLEVLL…YTEGSIPPTV (103 aa)) enclose the C2 domain. Residues Asp-20, Asp-26, Asp-73, Asp-75, and Asp-81 each contribute to the Ca(2+) site. Residues 123–144 (TPEDDRDRGLSEEDIGGWKQSS) are disordered.

Ca(2+) is required as a cofactor.

This chain is Elicitor-responsive protein 3 (ERG3), found in Oryza sativa subsp. indica (Rice).